The following is a 257-amino-acid chain: MASKTGSRRWMLQLIMQLGSVLLTRCPFWGCFSQLMLYAERAEARRKPDIPVPYLYFDMGAAVLCASFMSFGVKRRWFALGAALQLAISTYAAYVGGYVHYGDWLKVRMYSRTVAIIGGFLVLASGAGELYRRKPRSRSLQSTGQVFLGVYLVCVAYSLQHSKEDRLAYLNHLPGGELMVQLFFVLYGVLALAFLSGYYVTLAAQILAVLLPPVMLLIDGNVAYWHNTRRVEFWNQMKLLGESVGIFGAAVILATDG.

8 helical membrane-spanning segments follow: residues 21–40 (VLLT…LYAE), 52–72 (VPYL…MSFG), 77–97 (WFAL…YVGG), 110–130 (YSRT…AGEL), 139–159 (SLQS…AYSL), 182–202 (LFFV…YVTL), 206–226 (ILAV…AYWH), and 233–253 (FWNQ…AVIL).

Its subcellular location is the membrane. May activate NF-kappa-B signaling pathways. The polypeptide is Transmembrane protein 101 (TMEM101) (Bos taurus (Bovine)).